We begin with the raw amino-acid sequence, 453 residues long: Indoleamine 2,3-dioxygenase (453 aa).

His331 serves as a coordination point for heme.

Belongs to the indoleamine 2,3-dioxygenase family. Requires heme as cofactor.

It catalyses the reaction D-tryptophan + O2 = N-formyl-D-kynurenine. The catalysed reaction is L-tryptophan + O2 = N-formyl-L-kynurenine. Its pathway is cofactor biosynthesis; NAD(+) biosynthesis. Functionally, catalyzes the first step in tryptophan catabolism in order to supply de novo nicotinamide adenine dinucleotide (NAD(+)) via the kynurenine pathway. Plays a role in the cellular response to telomere uncapping. This chain is Indoleamine 2,3-dioxygenase (BNA2), found in Saccharomyces cerevisiae (strain ATCC 204508 / S288c) (Baker's yeast).